A 243-amino-acid polypeptide reads, in one-letter code: Ubiquinone/menaquinone biosynthesis C-methyltransferase UbiE (243 aa).

S-adenosyl-L-methionine-binding positions include Thr-69, Asp-90, and 116–117; that span reads DA.

Belongs to the class I-like SAM-binding methyltransferase superfamily. MenG/UbiE family.

The enzyme catalyses a 2-demethylmenaquinol + S-adenosyl-L-methionine = a menaquinol + S-adenosyl-L-homocysteine + H(+). It carries out the reaction a 2-methoxy-6-(all-trans-polyprenyl)benzene-1,4-diol + S-adenosyl-L-methionine = a 5-methoxy-2-methyl-3-(all-trans-polyprenyl)benzene-1,4-diol + S-adenosyl-L-homocysteine + H(+). The protein operates within quinol/quinone metabolism; menaquinone biosynthesis; menaquinol from 1,4-dihydroxy-2-naphthoate: step 2/2. It functions in the pathway cofactor biosynthesis; ubiquinone biosynthesis. In terms of biological role, methyltransferase required for the conversion of demethylmenaquinol (DMKH2) to menaquinol (MKH2) and the conversion of 2-polyprenyl-6-methoxy-1,4-benzoquinol (DDMQH2) to 2-polyprenyl-3-methyl-6-methoxy-1,4-benzoquinol (DMQH2). The sequence is that of Ubiquinone/menaquinone biosynthesis C-methyltransferase UbiE from Cupriavidus pinatubonensis (strain JMP 134 / LMG 1197) (Cupriavidus necator (strain JMP 134)).